We begin with the raw amino-acid sequence, 337 residues long: ATP-dependent (S)-NAD(P)H-hydrate dehydratase (337 aa).

A Phosphoserine modification is found at S6. The YjeF C-terminal domain maps to 11-335 (IKLAQKRCIP…DRVGEVFAKL (325 aa)). Residues G121 and 182–188 (NVVEFKR) contribute to the (6S)-NADPHX site. ATP-binding positions include 218–222 (KGQSD) and 240–249 (GSNKRVGGQG). Residues 224 to 246 (IFSPDSEKDMLTNSEEGSNKRVG) are disordered. D250 is a (6S)-NADPHX binding site.

It belongs to the NnrD/CARKD family. The cofactor is Mg(2+).

Its subcellular location is the cytoplasm. The enzyme catalyses (6S)-NADHX + ATP = ADP + phosphate + NADH + H(+). The catalysed reaction is (6S)-NADPHX + ATP = ADP + phosphate + NADPH + H(+). Functionally, catalyzes the dehydration of the S-form of NAD(P)HX at the expense of ATP, which is converted to ADP. Together with NAD(P)HX epimerase, which catalyzes the epimerization of the S- and R-forms, the enzyme allows the repair of both epimers of NAD(P)HX, a damaged form of NAD(P)H that is a result of enzymatic or heat-dependent hydration. This is ATP-dependent (S)-NAD(P)H-hydrate dehydratase from Saccharomyces cerevisiae (strain ATCC 204508 / S288c) (Baker's yeast).